Reading from the N-terminus, the 162-residue chain is NADH-ubiquinone oxidoreductase chain 6 (162 aa).

The next 4 helical transmembrane spans lie at 1-21 (MIFYTVLVLMFLGSTLVFYSL), 46-66 (FSFIALVLILIYVGGMLVVFV), 84-104 (EILVLSSLVISWGVLNFDPLI), and 130-150 (GGYLLIGGYILLVALVVALVL).

The protein belongs to the complex I subunit 6 family.

It localises to the mitochondrion membrane. It catalyses the reaction a ubiquinone + NADH + 5 H(+)(in) = a ubiquinol + NAD(+) + 4 H(+)(out). Core subunit of the mitochondrial membrane respiratory chain NADH dehydrogenase (Complex I) that is believed to belong to the minimal assembly required for catalysis. Complex I functions in the transfer of electrons from NADH to the respiratory chain. The immediate electron acceptor for the enzyme is believed to be ubiquinone. The sequence is that of NADH-ubiquinone oxidoreductase chain 6 (ND6) from Patiria pectinifera (Starfish).